A 532-amino-acid chain; its full sequence is Vesicular acetylcholine transporter unc-17 (532 aa).

Over methionine 1–lysine 31 the chain is Cytoplasmic. A helical membrane pass occupies residues cysteine 32–valine 52. Over proline 53–glutamate 101 the chain is Lumenal, vesicle. 2 N-linked (GlcNAc...) asparagine glycosylation sites follow: asparagine 74 and asparagine 81. The helical transmembrane segment at leucine 102 to glycine 121 threads the bilayer. Residues tyrosine 122–glutamate 130 lie on the Cytoplasmic side of the membrane. A helical transmembrane segment spans residues isoleucine 131–lysine 151. Over serine 152–arginine 160 the chain is Lumenal, vesicle. A helical transmembrane segment spans residues serine 161–aspartate 180. The Cytoplasmic segment spans residues arginine 181–alanine 191. A helical transmembrane segment spans residues leucine 192–leucine 213. The Lumenal, vesicle portion of the chain corresponds to tyrosine 214 to lysine 219. The helical transmembrane segment at proline 220–asparagine 242 threads the bilayer. The Cytoplasmic portion of the chain corresponds to proline 243–aspartate 266. A helical transmembrane segment spans residues proline 267–leucine 286. The Lumenal, vesicle segment spans residues glutamate 287–glycine 303. Residues tryptophan 304–leucine 328 traverse the membrane as a helical segment. Over arginine 329–threonine 335 the chain is Cytoplasmic. The helical transmembrane segment at tryptophan 336–threonine 356 threads the bilayer. Over threonine 357–serine 367 the chain is Lumenal, vesicle. A helical transmembrane segment spans residues phenylalanine 368–valine 388. The Cytoplasmic segment spans residues aspartate 389 to valine 393. The chain crosses the membrane as a helical span at residues serine 394 to alanine 412. Residues phenylalanine 413–alanine 418 lie on the Lumenal, vesicle side of the membrane. A helical transmembrane segment spans residues glycine 419 to threonine 440. The Cytoplasmic segment spans residues tyrosine 441–tryptophan 532.

The protein belongs to the major facilitator superfamily. Vesicular transporter family. In terms of tissue distribution, detected in most regions of the nervous system including the nerve ring, the ventral and dorsal nerve cords, and the pharyngeal nervous system. Expressed in most cholinergic neurons. In addition, expressed in SIA, SIB and SMB sublateral motor neurons.

It localises to the cytoplasmic vesicle. It is found in the secretory vesicle. The protein resides in the synaptic vesicle membrane. Involved in acetylcholine transport into synaptic vesicles. The chain is Vesicular acetylcholine transporter unc-17 from Caenorhabditis elegans.